The sequence spans 235 residues: Hydroxyacylglutathione hydrolase (235 aa).

Zn(2+) is bound by residues His53, His55, Asp57, His58, His109, Asp127, and His165.

Belongs to the metallo-beta-lactamase superfamily. Glyoxalase II family. As to quaternary structure, monomer. Zn(2+) serves as cofactor.

The enzyme catalyses an S-(2-hydroxyacyl)glutathione + H2O = a 2-hydroxy carboxylate + glutathione + H(+). It participates in secondary metabolite metabolism; methylglyoxal degradation; (R)-lactate from methylglyoxal: step 2/2. Its function is as follows. Thiolesterase that catalyzes the hydrolysis of S-D-lactoyl-glutathione to form glutathione and D-lactic acid. The sequence is that of Hydroxyacylglutathione hydrolase from Haemophilus ducreyi (strain 35000HP / ATCC 700724).